The primary structure comprises 126 residues: Glycine cleavage system H protein (126 aa).

The Lipoyl-binding domain maps to 23–104 (TLTVGITDHA…PYDNWLFKIK (82 aa)). Lys-64 is subject to N6-lipoyllysine.

This sequence belongs to the GcvH family. The glycine cleavage system is composed of four proteins: P, T, L and H. (R)-lipoate is required as a cofactor.

The glycine cleavage system catalyzes the degradation of glycine. The H protein shuttles the methylamine group of glycine from the P protein to the T protein. This is Glycine cleavage system H protein from Paraburkholderia phymatum (strain DSM 17167 / CIP 108236 / LMG 21445 / STM815) (Burkholderia phymatum).